A 306-amino-acid chain; its full sequence is MNVAVQSRVDRETIGVARKTKAYVALTKPRVIELLLVTTAPVMILAQGGWPNPWLILGVLVGGTLSAGSANAFNCYIDRDIDRVMKRTQRRPLVTGELTDREALVFAWIIGVASIVWLGVISNWLAAALSLAAILFYVFVYTLWLKRRTPQNIVWGGAAGCMPVLIGWAAVTGDISWAPVILFMIVFLWTPPHYWPLSMKYRDDYASVNVPMLAVVRGRAAVGLQTILYAWATLACSLLLIPVAGMGLVYTLAALAGGGWFVYETHRLYDLAVRHEPIKPMRVFHASISYLSLLFLAVGIDPLLPF.

8 helical membrane passes run 31–50 (VIEL…QGGW), 55–77 (LILG…NCYI), 104–124 (LVFA…ISNW), 125–145 (LAAA…TLWL), 168–188 (WAAV…IVFL), 218–235 (GRAA…ATLA), 238–258 (LLLI…LAGG), and 286–306 (ASIS…LLPF).

The protein belongs to the UbiA prenyltransferase family. Protoheme IX farnesyltransferase subfamily.

The protein localises to the cell membrane. The catalysed reaction is heme b + (2E,6E)-farnesyl diphosphate + H2O = Fe(II)-heme o + diphosphate. It participates in porphyrin-containing compound metabolism; heme O biosynthesis; heme O from protoheme: step 1/1. Its function is as follows. Converts heme B (protoheme IX) to heme O by substitution of the vinyl group on carbon 2 of heme B porphyrin ring with a hydroxyethyl farnesyl side group. This chain is Protoheme IX farnesyltransferase, found in Clavibacter michiganensis subsp. michiganensis (strain NCPPB 382).